A 235-amino-acid polypeptide reads, in one-letter code: MICOS complex subunit MIC25 (235 aa).

A lipid anchor (N-myristoyl glycine) is attached at glycine 2. 2 positions are modified to phosphoserine: serine 13 and serine 31. Disordered stretches follow at residues 31 to 90 and 106 to 132; these read SENV…VKRY and KRER…HEEQ. Residues 129-176 adopt a coiled-coil conformation; that stretch reads HEEQKSVRLARELESREAELRRRDTFYKEQLERIERKNAEMYKLSSEQ. Residues 194 to 235 form the CHCH domain; it reads EPVCSGLQAQILHCYRDRPHEVLLCSDLVKAYQRCVSAAHKG. 2 consecutive short sequence motifs (cx9C motif) follow at residues 197–207 and 218–228; these read CSGLQAQILHC and CSDLVKAYQRC. 2 disulfides stabilise this stretch: cysteine 197/cysteine 228 and cysteine 207/cysteine 218.

It belongs to the MICOS complex subunit Mic19 family. Metazoan Mic25 subfamily. In terms of assembly, component of the mitochondrial contact site and cristae organizing system (MICOS) complex, composed of at least MICOS10/MIC10, CHCHD3/MIC19, CHCHD6/MIC25, APOOL/MIC27, IMMT/MIC60, APOO/MIC23/MIC26 and MICOS13/MIC13. This complex was also known under the names MINOS or MitOS complex. The MICOS complex associates with mitochondrial outer membrane proteins SAMM50, MTX1 and MTX2 (together described as components of the mitochondrial outer membrane sorting assembly machinery (SAM) complex) and DNAJC11, mitochondrial inner membrane protein TMEM11 and with HSPA9. The MICOS and SAM complexes together with DNAJC11 are part of a large protein complex spanning both membranes termed the mitochondrial intermembrane space bridging (MIB) complex. Interacts with DISC1. Interacts with DISC1. Interacts with IMMT/MIC60. (Microbial infection) Interacts with human cytomegalovirus protein UL37 isoform vMIA; this interaction rewires mitochondria by engaging the conserved MICOS complex.

It localises to the mitochondrion inner membrane. The protein resides in the mitochondrion. Its function is as follows. Component of the MICOS complex, a large protein complex of the mitochondrial inner membrane that plays crucial roles in the maintenance of crista junctions, inner membrane architecture, and formation of contact sites to the outer membrane. This Homo sapiens (Human) protein is MICOS complex subunit MIC25 (CHCHD6).